A 423-amino-acid chain; its full sequence is MNLKEKLFPENRLGLNRFWNFSRGGIDNFRTGLRDAVSGVEQTRSRMMEYDQLLVWAILSLMLIGLVMVYSASITLADGPKYANYSSNFFLIRHMISLAIAIGVGIWAFKIPTKVWDRYSPVIFGITVLLLIAVLIPGVGRGVNGAKRWIPLGLMNFQSSELMKFAAVIFAASYTVQRQEYLHSFVKGMLPMGIAVALVGGLLMAEPDMGAFVVVALIAFGILFLGGINAKLFGGLIAVGLMSGATMIAFSPLRRGRMLAFMDPWQVDNAANKGYQLTHSLMAFGRGEWFGTGLGGSVEKLHYLPEAHTDFIMAVIGEELGFVGVVVMIFLFYWIVRRAFLIGRTALQLDRSFAGLAAKGVAIWIGWQAFINMGVNLGLLPTKGLTLPLVSYGGSGILMNAVAMAMLLRIDFENRILMRGGKL.

Residues 1–53 (MNLKEKLFPENRLGLNRFWNFSRGGIDNFRTGLRDAVSGVEQTRSRMMEYDQL) are Cytoplasmic-facing. Residues 54-74 (LVWAILSLMLIGLVMVYSASI) form a helical membrane-spanning segment. Residues 75-88 (TLADGPKYANYSSN) are Periplasmic-facing. The chain crosses the membrane as a helical span at residues 89-109 (FFLIRHMISLAIAIGVGIWAF). The Cytoplasmic portion of the chain corresponds to 110–119 (KIPTKVWDRY). The chain crosses the membrane as a helical span at residues 120 to 140 (SPVIFGITVLLLIAVLIPGVG). Over 141 to 149 (RGVNGAKRW) the chain is Periplasmic. A helical transmembrane segment spans residues 150-170 (IPLGLMNFQSSELMKFAAVIF). Residues 171–184 (AASYTVQRQEYLHS) are Cytoplasmic-facing. Residues 185–205 (FVKGMLPMGIAVALVGGLLMA) traverse the membrane as a helical segment. Over 206–208 (EPD) the chain is Periplasmic. Residues 209–229 (MGAFVVVALIAFGILFLGGIN) traverse the membrane as a helical segment. The Cytoplasmic segment spans residues 230 to 231 (AK). A helical membrane pass occupies residues 232 to 252 (LFGGLIAVGLMSGATMIAFSP). Topologically, residues 253–310 (LRRGRMLAFMDPWQVDNAANKGYQLTHSLMAFGRGEWFGTGLGGSVEKLHYLPEAHTD) are periplasmic. Residues 311 to 331 (FIMAVIGEELGFVGVVVMIFL) form a helical membrane-spanning segment. Residues 332-359 (FYWIVRRAFLIGRTALQLDRSFAGLAAK) are Cytoplasmic-facing. A helical transmembrane segment spans residues 360–380 (GVAIWIGWQAFINMGVNLGLL). The Periplasmic segment spans residues 381 to 386 (PTKGLT). A helical transmembrane segment spans residues 387 to 407 (LPLVSYGGSGILMNAVAMAML). At 408–423 (LRIDFENRILMRGGKL) the chain is on the cytoplasmic side.

It belongs to the SEDS family. FtsW subfamily.

It localises to the cell inner membrane. The catalysed reaction is [GlcNAc-(1-&gt;4)-Mur2Ac(oyl-L-Ala-gamma-D-Glu-L-Lys-D-Ala-D-Ala)](n)-di-trans,octa-cis-undecaprenyl diphosphate + beta-D-GlcNAc-(1-&gt;4)-Mur2Ac(oyl-L-Ala-gamma-D-Glu-L-Lys-D-Ala-D-Ala)-di-trans,octa-cis-undecaprenyl diphosphate = [GlcNAc-(1-&gt;4)-Mur2Ac(oyl-L-Ala-gamma-D-Glu-L-Lys-D-Ala-D-Ala)](n+1)-di-trans,octa-cis-undecaprenyl diphosphate + di-trans,octa-cis-undecaprenyl diphosphate + H(+). It participates in cell wall biogenesis; peptidoglycan biosynthesis. Peptidoglycan polymerase that is essential for cell division. The chain is Probable peptidoglycan glycosyltransferase FtsW from Polynucleobacter necessarius subsp. necessarius (strain STIR1).